We begin with the raw amino-acid sequence, 145 residues long: Endoribonuclease YbeY (145 aa).

Zn(2+) contacts are provided by His109, His113, and His119.

Belongs to the endoribonuclease YbeY family. Zn(2+) is required as a cofactor.

Its subcellular location is the cytoplasm. Its function is as follows. Single strand-specific metallo-endoribonuclease involved in late-stage 70S ribosome quality control and in maturation of the 3' terminus of the 16S rRNA. This chain is Endoribonuclease YbeY, found in Vesicomyosocius okutanii subsp. Calyptogena okutanii (strain HA).